The following is a 457-amino-acid chain: Argininosuccinate lyase (457 aa).

The protein belongs to the lyase 1 family. Argininosuccinate lyase subfamily.

The protein resides in the cytoplasm. The catalysed reaction is 2-(N(omega)-L-arginino)succinate = fumarate + L-arginine. The protein operates within amino-acid biosynthesis; L-arginine biosynthesis; L-arginine from L-ornithine and carbamoyl phosphate: step 3/3. In Haemophilus influenzae (strain 86-028NP), this protein is Argininosuccinate lyase.